The sequence spans 278 residues: Elongation factor Ts (278 aa).

An involved in Mg(2+) ion dislocation from EF-Tu region spans residues 82–85; sequence TEPV.

The protein belongs to the EF-Ts family.

The protein resides in the cytoplasm. In terms of biological role, associates with the EF-Tu.GDP complex and induces the exchange of GDP to GTP. It remains bound to the aminoacyl-tRNA.EF-Tu.GTP complex up to the GTP hydrolysis stage on the ribosome. In Cytophaga hutchinsonii (strain ATCC 33406 / DSM 1761 / CIP 103989 / NBRC 15051 / NCIMB 9469 / D465), this protein is Elongation factor Ts.